Reading from the N-terminus, the 194-residue chain is Ribosome maturation factor RimP (194 aa).

Belongs to the RimP family.

It localises to the cytoplasm. Required for maturation of 30S ribosomal subunits. The polypeptide is Ribosome maturation factor RimP (Jannaschia sp. (strain CCS1)).